Here is a 225-residue protein sequence, read N- to C-terminus: UPF0758 protein BCE_4545 (225 aa).

An MPN domain is found at 103 to 225; it reads SIRSPEDCAT…FVSLKEKGHI (123 aa). Residues H174, H176, and D187 each contribute to the Zn(2+) site. The JAMM motif motif lies at 174-187; that stretch reads HNHPSGDPAPSRED.

The protein belongs to the UPF0758 family.

In Bacillus cereus (strain ATCC 10987 / NRS 248), this protein is UPF0758 protein BCE_4545.